We begin with the raw amino-acid sequence, 254 residues long: GPI alpha-1,4-mannosyltransferase I, stabilizing subunit (254 aa).

The N-terminal stretch at M1 to A22 is a signal peptide. Residues D23–L226 lie on the Lumenal side of the membrane. Residue N211 is glycosylated (N-linked (GlcNAc...) asparagine). Residues V227 to F247 form a helical membrane-spanning segment. Residues K248–L254 lie on the Cytoplasmic side of the membrane.

It belongs to the PIGX family. In terms of assembly, part of the glycosylphosphatidylinositol-mannosyltransferase I complex that is composed of PIGM and PIGX. Interacts with PIGM; PIGX stabilizes PIGM.

Its subcellular location is the endoplasmic reticulum membrane. It participates in glycolipid biosynthesis; glycosylphosphatidylinositol-anchor biosynthesis. Functionally, stabilizing subunit of the glycosylphosphatidylinositol-mannosyltransferase I complex which catalyzes the transfer of the first mannose, via an alpha-1,4 bond from a dolichol-phosphate-mannose (Dol-P-Man) to the glucosaminyl acyl phosphatidylinositol (GlcN-(acyl)PI) intermediate to generate alpha-D-Man-(1-&gt;4)-alpha-D-GlcN-(1-&gt;6)-(1-radyl,2-acyl-sn-glycero-3-phospho)-2-acyl-inositol and participates in the sixth step of the glycosylphosphatidylinositol-anchor biosynthesis. Probably acts by stabilizing the mannosyltransferase PIGM. This is GPI alpha-1,4-mannosyltransferase I, stabilizing subunit from Mus musculus (Mouse).